We begin with the raw amino-acid sequence, 966 residues long: Mitogen-activated protein kinase kinase kinase 13 (966 aa).

2 disordered regions span residues 1 to 22 and 93 to 112; these read MANFQEHLSCSSSPHLPFSESK and SEMAVSQGNSNTVDAESTSG. A compositionally biased stretch (polar residues) spans 96–112; the sequence is AVSQGNSNTVDAESTSG. Positions 168 to 409 constitute a Protein kinase domain; it reads ISELQWLGSG…FRQTLMHLDI (242 aa). Residues 174–182 and Lys-195 contribute to the ATP site; that span reads LGSGAQGAV. The active-site Proton acceptor is the Asp-279. Leucine-zipper stretches follow at residues 433 to 454 and 486 to 507; these read VKKHFEKIKSEGTCIHRLDEEL and LSAIMLQLEMREKELVKREQAV. 4 disordered regions span residues 534–652, 744–834, 846–873, and 887–906; these read KRKG…SQSH, DIPS…RRQR, STFSSENFSVSDGEEGNTSDHSNSPDEL, and DLLSQTPEIPIDISSHSDGL. The span at 567 to 581 shows a compositional bias: low complexity; it reads SPLSGSPKMSTSSSK. Over residues 582-594 the composition is skewed to basic residues; that stretch reads SRYRSKPRHRRGN. Polar residues-rich tracts occupy residues 609-629 and 781-795; these read QPAQENSPNPTYLHQAQSQYP and FSSCRSESSLGTSHL. A compositionally biased stretch (acidic residues) spans 814-827; sequence DSSEEEEGEVDSEV. An acidic region spans residues 815-828; it reads SSEEEEGEVDSEVE. Polar residues predominate over residues 846–855; that stretch reads STFSSENFSV.

This sequence belongs to the protein kinase superfamily. STE Ser/Thr protein kinase family. MAP kinase kinase kinase subfamily. In terms of assembly, homodimer; forms dimers through the leucine-zipper motif. Interacts with the C-terminus of MAPK8IP1 through the kinase catalytic domain. Binds PRDX3. Associates with the IKK complex through the kinase domain. Mg(2+) is required as a cofactor. Autophosphorylated on serine and threonine residues.

It localises to the cytoplasm. Its subcellular location is the membrane. It catalyses the reaction L-seryl-[protein] + ATP = O-phospho-L-seryl-[protein] + ADP + H(+). The catalysed reaction is L-threonyl-[protein] + ATP = O-phospho-L-threonyl-[protein] + ADP + H(+). Activated by autophosphorylation and homodimerization. Its function is as follows. Activates the JUN N-terminal pathway through activation of the MAP kinase kinase MAP2K7. Acts synergistically with PRDX3 to regulate the activation of NF-kappa-B in the cytosol. This activation is kinase-dependent and involves activating the IKK complex, the IKBKB-containing complex that phosphorylates inhibitors of NF-kappa-B. The protein is Mitogen-activated protein kinase kinase kinase 13 of Pongo abelii (Sumatran orangutan).